Reading from the N-terminus, the 206-residue chain is Elongation factor Ts (206 aa).

An involved in Mg(2+) ion dislocation from EF-Tu region spans residues 81–84 (TDFV).

This sequence belongs to the EF-Ts family.

The protein localises to the cytoplasm. Functionally, associates with the EF-Tu.GDP complex and induces the exchange of GDP to GTP. It remains bound to the aminoacyl-tRNA.EF-Tu.GTP complex up to the GTP hydrolysis stage on the ribosome. This is Elongation factor Ts from Maridesulfovibrio salexigens (strain ATCC 14822 / DSM 2638 / NCIMB 8403 / VKM B-1763) (Desulfovibrio salexigens).